The following is a 255-amino-acid chain: uncharacterized protein (255 aa).

The protein belongs to the IIV-6 155L family.

This is an uncharacterized protein from Acheta domesticus (House cricket).